Reading from the N-terminus, the 476-residue chain is Glutamate--tRNA ligase (476 aa).

Positions Pro9–Thr19 match the 'HIGH' region motif. The short motif at Lys248 to Arg252 is the 'KMSKS' region element. Lys251 lines the ATP pocket.

The protein belongs to the class-I aminoacyl-tRNA synthetase family. Glutamate--tRNA ligase type 1 subfamily. As to quaternary structure, monomer.

Its subcellular location is the cytoplasm. It catalyses the reaction tRNA(Glu) + L-glutamate + ATP = L-glutamyl-tRNA(Glu) + AMP + diphosphate. In terms of biological role, catalyzes the attachment of glutamate to tRNA(Glu) in a two-step reaction: glutamate is first activated by ATP to form Glu-AMP and then transferred to the acceptor end of tRNA(Glu). The polypeptide is Glutamate--tRNA ligase (Prochlorococcus marinus (strain NATL2A)).